We begin with the raw amino-acid sequence, 312 residues long: Peroxidase (312 aa).

Positions 1-23 (MAMGSASCISLVVLVALATAASG) are cleaved as a signal peptide. A Pyrrolidone carboxylic acid modification is found at glutamine 24. 4 disulfides stabilise this stretch: cysteine 34–cysteine 107, cysteine 67–cysteine 70, cysteine 113–cysteine 307, and cysteine 192–cysteine 218. The active-site Proton acceptor is histidine 65. Ca(2+) contacts are provided by aspartate 66, glycine 69, aspartate 71, and serine 73. Proline 155 is a substrate binding site. A heme b-binding site is contributed by histidine 185. Threonine 186 is a Ca(2+) binding site. The Ca(2+) site is built by aspartate 231, threonine 234, and aspartate 239. N-linked (GlcNAc...) asparagine glycosylation occurs at asparagine 262.

It belongs to the peroxidase family. Classical plant (class III) peroxidase subfamily. The cofactor is Ca(2+). Heme b is required as a cofactor. As to expression, root.

It localises to the secreted. The catalysed reaction is 2 a phenolic donor + H2O2 = 2 a phenolic radical donor + 2 H2O. In terms of biological role, removal of H(2)O(2), oxidation of toxic reductants, biosynthesis and degradation of lignin, suberization, auxin catabolism, response to environmental stresses such as wounding, pathogen attack and oxidative stress. These functions might be dependent on each isozyme/isoform in each plant tissue. Its function is as follows. Involved in defense response to powdery meldew fungus. The polypeptide is Peroxidase (Triticum aestivum (Wheat)).